The sequence spans 259 residues: Flap endonuclease Xni (259 aa).

A Mg(2+)-binding site is contributed by D109. The 91-residue stretch at 165–255 (VKPQQLSDYW…FNLQDLRFTA (91 aa)) folds into the 5'-3' exonuclease domain. 3 residues coordinate K(+): L176, I187, and I190. An interaction with DNA region spans residues 189–194 (GIGPKA).

Belongs to the Xni family. The cofactor is Mg(2+). It depends on K(+) as a cofactor.

Its function is as follows. Has flap endonuclease activity. During DNA replication, flap endonucleases cleave the 5'-overhanging flap structure that is generated by displacement synthesis when DNA polymerase encounters the 5'-end of a downstream Okazaki fragment. The sequence is that of Flap endonuclease Xni from Vibrio vulnificus (strain YJ016).